Consider the following 33-residue polypeptide: uncharacterized protein (33 aa).

This is an uncharacterized protein from Saccharomyces cerevisiae (strain ATCC 204508 / S288c) (Baker's yeast).